The following is a 616-amino-acid chain: Dihydroxy-acid dehydratase (616 aa).

Aspartate 81 is a Mg(2+) binding site. Cysteine 122 contacts [2Fe-2S] cluster. The Mg(2+) site is built by aspartate 123 and lysine 124. Position 124 is an N6-carboxylysine (lysine 124). Cysteine 195 provides a ligand contact to [2Fe-2S] cluster. Residue glutamate 491 participates in Mg(2+) binding. The active-site Proton acceptor is serine 517.

The protein belongs to the IlvD/Edd family. Homodimer. [2Fe-2S] cluster serves as cofactor. The cofactor is Mg(2+).

The catalysed reaction is (2R)-2,3-dihydroxy-3-methylbutanoate = 3-methyl-2-oxobutanoate + H2O. It catalyses the reaction (2R,3R)-2,3-dihydroxy-3-methylpentanoate = (S)-3-methyl-2-oxopentanoate + H2O. Its pathway is amino-acid biosynthesis; L-isoleucine biosynthesis; L-isoleucine from 2-oxobutanoate: step 3/4. It participates in amino-acid biosynthesis; L-valine biosynthesis; L-valine from pyruvate: step 3/4. In terms of biological role, functions in the biosynthesis of branched-chain amino acids. Catalyzes the dehydration of (2R,3R)-2,3-dihydroxy-3-methylpentanoate (2,3-dihydroxy-3-methylvalerate) into 2-oxo-3-methylpentanoate (2-oxo-3-methylvalerate) and of (2R)-2,3-dihydroxy-3-methylbutanoate (2,3-dihydroxyisovalerate) into 2-oxo-3-methylbutanoate (2-oxoisovalerate), the penultimate precursor to L-isoleucine and L-valine, respectively. This Photorhabdus laumondii subsp. laumondii (strain DSM 15139 / CIP 105565 / TT01) (Photorhabdus luminescens subsp. laumondii) protein is Dihydroxy-acid dehydratase.